The chain runs to 285 residues: Bifunctional protein FolD (285 aa).

NADP(+) contacts are provided by residues 165–167 (GAS) and I232.

Belongs to the tetrahydrofolate dehydrogenase/cyclohydrolase family. In terms of assembly, homodimer.

It catalyses the reaction (6R)-5,10-methylene-5,6,7,8-tetrahydrofolate + NADP(+) = (6R)-5,10-methenyltetrahydrofolate + NADPH. The catalysed reaction is (6R)-5,10-methenyltetrahydrofolate + H2O = (6R)-10-formyltetrahydrofolate + H(+). It participates in one-carbon metabolism; tetrahydrofolate interconversion. In terms of biological role, catalyzes the oxidation of 5,10-methylenetetrahydrofolate to 5,10-methenyltetrahydrofolate and then the hydrolysis of 5,10-methenyltetrahydrofolate to 10-formyltetrahydrofolate. The polypeptide is Bifunctional protein FolD (Sulfurihydrogenibium sp. (strain YO3AOP1)).